The following is a 130-amino-acid chain: Protein AUXIN-REGULATED GENE INVOLVED IN ORGAN SIZE (130 aa).

The segment at Phe-65 to Ser-116 is organ Size Related (OSR) domain. The next 2 membrane-spanning stretches (helical) occupy residues Leu-70–Leu-90 and Pro-94–Met-114.

It belongs to the plant organ size related (OSR) protein family. As to expression, mostly expressed in flowers, inflorescence stems, leaf primordia and young leaves, and, to a lower extent, in siliques, cotyledon vascular bundles, roots (pericycle and root tips) and mature leaves.

It localises to the membrane. The protein resides in the nucleus. It is found in the cytoplasm. The protein localises to the endoplasmic reticulum. Its function is as follows. Promotes cell proliferation-dependent organ growth. Takes part in the AXR1-dependent auxin signaling pathway that requires ANT during organogenesis. This is Protein AUXIN-REGULATED GENE INVOLVED IN ORGAN SIZE (ARGOS) from Arabidopsis thaliana (Mouse-ear cress).